The following is a 208-amino-acid chain: Ribosomal RNA small subunit methyltransferase G (208 aa).

S-adenosyl-L-methionine is bound by residues glycine 76, leucine 81, 127-128 (VE), and arginine 142.

The protein belongs to the methyltransferase superfamily. RNA methyltransferase RsmG family.

The protein resides in the cytoplasm. It carries out the reaction guanosine(527) in 16S rRNA + S-adenosyl-L-methionine = N(7)-methylguanosine(527) in 16S rRNA + S-adenosyl-L-homocysteine. Specifically methylates the N7 position of guanine in position 527 of 16S rRNA. The protein is Ribosomal RNA small subunit methyltransferase G of Legionella pneumophila subsp. pneumophila (strain Philadelphia 1 / ATCC 33152 / DSM 7513).